The sequence spans 270 residues: 4-hydroxy-tetrahydrodipicolinate reductase (270 aa).

NAD(+) contacts are provided by residues 8 to 13 (GALGRM), Asp-34, 102 to 104 (GTT), and 128 to 131 (SQNY). His-160 acts as the Proton donor/acceptor in catalysis. A (S)-2,3,4,5-tetrahydrodipicolinate-binding site is contributed by His-161. Lys-164 acts as the Proton donor in catalysis. Residue 170–171 (GT) coordinates (S)-2,3,4,5-tetrahydrodipicolinate.

The protein belongs to the DapB family.

Its subcellular location is the cytoplasm. It carries out the reaction (S)-2,3,4,5-tetrahydrodipicolinate + NAD(+) + H2O = (2S,4S)-4-hydroxy-2,3,4,5-tetrahydrodipicolinate + NADH + H(+). The catalysed reaction is (S)-2,3,4,5-tetrahydrodipicolinate + NADP(+) + H2O = (2S,4S)-4-hydroxy-2,3,4,5-tetrahydrodipicolinate + NADPH + H(+). The protein operates within amino-acid biosynthesis; L-lysine biosynthesis via DAP pathway; (S)-tetrahydrodipicolinate from L-aspartate: step 4/4. In terms of biological role, catalyzes the conversion of 4-hydroxy-tetrahydrodipicolinate (HTPA) to tetrahydrodipicolinate. This is 4-hydroxy-tetrahydrodipicolinate reductase from Methanococcus maripaludis (strain DSM 14266 / JCM 13030 / NBRC 101832 / S2 / LL).